A 1101-amino-acid polypeptide reads, in one-letter code: Cytospin-A (1101 aa).

Disordered regions lie at residues 1–170 (MRKA…NQIS) and 280–366 (SDCG…SGNA). Composition is skewed to polar residues over residues 29 to 48 (ESSA…LSKA) and 64 to 86 (ASNS…TAMS). The segment covering 93–110 (RSSAGSSSNTKRSGSSGA) has biased composition (low complexity). 2 stretches are compositionally biased toward basic and acidic residues: residues 114 to 125 (GSSRERLRERSR) and 151 to 165 (GRTD…KSKS). Residues 162–254 (KSKSDNQISD…LKDRLNALGF (93 aa)) are a coiled coil. Over residues 333 to 355 (LTSSDDALDAPSSSSESEGLPST) the composition is skewed to low complexity. 2 coiled-coil regions span residues 373–427 (CLTE…MDSL) and 492–785 (QHLS…RGRV). The disordered stretch occupies residues 923-978 (SISVSRRSSEELKRDISVPDGSSAPSLMVMTSPSPQLSLSSSSPTASVTPTARSRI). Residues 929–939 (RSSEELKRDIS) are compositionally biased toward basic and acidic residues. Residues 953–975 (TSPSPQLSLSSSSPTASVTPTAR) are compositionally biased toward low complexity. The Calponin-homology (CH) domain maps to 995–1100 (GSKRNALLKW…YVTSIYKYFE (106 aa)).

This sequence belongs to the cytospin-A family. In terms of assembly, may interact with both microtubules and actin cytoskeleton.

The protein localises to the cytoplasm. It localises to the cytoskeleton. The protein resides in the spindle. It is found in the cell junction. Its subcellular location is the gap junction. Functionally, involved in cytokinesis and spindle organization. May play a role in actin cytoskeleton organization and microtubule stabilization and hence required for proper cell adhesion and migration. This chain is Cytospin-A (specc1l), found in Xenopus tropicalis (Western clawed frog).